A 349-amino-acid polypeptide reads, in one-letter code: tRNA pseudouridine synthase D (349 aa).

Phe-26 is a substrate binding site. Catalysis depends on Asp-79, which acts as the Nucleophile. Asn-128 contacts substrate. In terms of domain architecture, TRUD spans 154-302 (GVPNYFGSQR…VEGSRRAVLL (149 aa)). Phe-328 contacts substrate.

Belongs to the pseudouridine synthase TruD family.

It catalyses the reaction uridine(13) in tRNA = pseudouridine(13) in tRNA. Its function is as follows. Responsible for synthesis of pseudouridine from uracil-13 in transfer RNAs. This Yersinia pestis bv. Antiqua (strain Antiqua) protein is tRNA pseudouridine synthase D.